The primary structure comprises 679 residues: tRNA uridine 5-carboxymethylaminomethyl modification enzyme MnmG (679 aa).

Residue 13–18 coordinates FAD; sequence GGGHAG. 280-294 serves as a coordination point for NAD(+); that stretch reads GPRYCPSVEDKINRF.

Belongs to the MnmG family. As to quaternary structure, homodimer. Heterotetramer of two MnmE and two MnmG subunits. Requires FAD as cofactor.

Its subcellular location is the cytoplasm. Its function is as follows. NAD-binding protein involved in the addition of a carboxymethylaminomethyl (cmnm) group at the wobble position (U34) of certain tRNAs, forming tRNA-cmnm(5)s(2)U34. In Albidiferax ferrireducens (strain ATCC BAA-621 / DSM 15236 / T118) (Rhodoferax ferrireducens), this protein is tRNA uridine 5-carboxymethylaminomethyl modification enzyme MnmG.